A 269-amino-acid polypeptide reads, in one-letter code: Tryptophan synthase alpha chain (269 aa).

Residues Glu54 and Asp65 each act as proton acceptor in the active site.

Belongs to the TrpA family. Tetramer of two alpha and two beta chains.

It catalyses the reaction (1S,2R)-1-C-(indol-3-yl)glycerol 3-phosphate + L-serine = D-glyceraldehyde 3-phosphate + L-tryptophan + H2O. The protein operates within amino-acid biosynthesis; L-tryptophan biosynthesis; L-tryptophan from chorismate: step 5/5. In terms of biological role, the alpha subunit is responsible for the aldol cleavage of indoleglycerol phosphate to indole and glyceraldehyde 3-phosphate. The polypeptide is Tryptophan synthase alpha chain (Synechococcus sp. (strain CC9902)).